The primary structure comprises 416 residues: 4-hydroxy-3-methylbut-2-en-1-yl diphosphate synthase (flavodoxin) (416 aa).

[4Fe-4S] cluster contacts are provided by Cys-304, Cys-307, Cys-350, and Glu-357.

The protein belongs to the IspG family. It depends on [4Fe-4S] cluster as a cofactor.

It carries out the reaction (2E)-4-hydroxy-3-methylbut-2-enyl diphosphate + oxidized [flavodoxin] + H2O + 2 H(+) = 2-C-methyl-D-erythritol 2,4-cyclic diphosphate + reduced [flavodoxin]. It functions in the pathway isoprenoid biosynthesis; isopentenyl diphosphate biosynthesis via DXP pathway; isopentenyl diphosphate from 1-deoxy-D-xylulose 5-phosphate: step 5/6. Functionally, converts 2C-methyl-D-erythritol 2,4-cyclodiphosphate (ME-2,4cPP) into 1-hydroxy-2-methyl-2-(E)-butenyl 4-diphosphate. The chain is 4-hydroxy-3-methylbut-2-en-1-yl diphosphate synthase (flavodoxin) from Rhizobium etli (strain CIAT 652).